Reading from the N-terminus, the 219-residue chain is 3,4-dihydroxy-2-butanone 4-phosphate synthase (219 aa).

D-ribulose 5-phosphate is bound by residues 28–29 (RE), Asp33, 140–144 (REGHT), and Glu164. Residue Glu29 participates in Mg(2+) binding. Mg(2+) is bound at residue His143.

This sequence belongs to the DHBP synthase family. As to quaternary structure, homodimer. Mg(2+) serves as cofactor. Requires Mn(2+) as cofactor.

The enzyme catalyses D-ribulose 5-phosphate = (2S)-2-hydroxy-3-oxobutyl phosphate + formate + H(+). Its pathway is cofactor biosynthesis; riboflavin biosynthesis; 2-hydroxy-3-oxobutyl phosphate from D-ribulose 5-phosphate: step 1/1. Functionally, catalyzes the conversion of D-ribulose 5-phosphate to formate and 3,4-dihydroxy-2-butanone 4-phosphate. The protein is 3,4-dihydroxy-2-butanone 4-phosphate synthase of Methanocorpusculum labreanum (strain ATCC 43576 / DSM 4855 / Z).